We begin with the raw amino-acid sequence, 831 residues long: uncharacterized protein (831 aa).

His-787 acts as the Tele-phosphohistidine intermediate in catalysis.

The protein belongs to the PEP-utilizing enzyme family.

This is an uncharacterized protein from Bacillus subtilis (strain 168).